The following is a 474-amino-acid chain: tRNA-2-methylthio-N(6)-dimethylallyladenosine synthase (474 aa).

The region spanning 3–120 (QKLHIKTWGC…LPEMINQIRG (118 aa)) is the MTTase N-terminal domain. [4Fe-4S] cluster-binding residues include Cys12, Cys49, Cys83, Cys157, Cys161, and Cys164. The 233-residue stretch at 143–375 (RAEGPTAFVS…QERINQQAAQ (233 aa)) folds into the Radical SAM core domain. Positions 378–441 (RRMLGTEQRV…TNSLRGEVVR (64 aa)) constitute a TRAM domain.

The protein belongs to the methylthiotransferase family. MiaB subfamily. In terms of assembly, monomer. [4Fe-4S] cluster is required as a cofactor.

The protein resides in the cytoplasm. It catalyses the reaction N(6)-dimethylallyladenosine(37) in tRNA + (sulfur carrier)-SH + AH2 + 2 S-adenosyl-L-methionine = 2-methylsulfanyl-N(6)-dimethylallyladenosine(37) in tRNA + (sulfur carrier)-H + 5'-deoxyadenosine + L-methionine + A + S-adenosyl-L-homocysteine + 2 H(+). Its function is as follows. Catalyzes the methylthiolation of N6-(dimethylallyl)adenosine (i(6)A), leading to the formation of 2-methylthio-N6-(dimethylallyl)adenosine (ms(2)i(6)A) at position 37 in tRNAs that read codons beginning with uridine. This Haemophilus influenzae (strain PittGG) protein is tRNA-2-methylthio-N(6)-dimethylallyladenosine synthase.